We begin with the raw amino-acid sequence, 405 residues long: Argininosuccinate synthase (405 aa).

ATP is bound by residues alanine 12 to serine 20 and alanine 40. L-citrulline-binding residues include tyrosine 92 and serine 97. An ATP-binding site is contributed by glycine 122. 3 residues coordinate L-aspartate: threonine 124, asparagine 128, and aspartate 129. An L-citrulline-binding site is contributed by asparagine 128. 5 residues coordinate L-citrulline: arginine 132, serine 181, serine 190, glutamate 266, and tyrosine 278.

This sequence belongs to the argininosuccinate synthase family. Type 1 subfamily. In terms of assembly, homotetramer.

Its subcellular location is the cytoplasm. It catalyses the reaction L-citrulline + L-aspartate + ATP = 2-(N(omega)-L-arginino)succinate + AMP + diphosphate + H(+). The protein operates within amino-acid biosynthesis; L-arginine biosynthesis; L-arginine from L-ornithine and carbamoyl phosphate: step 2/3. The polypeptide is Argininosuccinate synthase (Edwardsiella ictaluri (strain 93-146)).